Here is a 197-residue protein sequence, read N- to C-terminus: Small ribosomal subunit protein eS1 (197 aa).

This sequence belongs to the eukaryotic ribosomal protein eS1 family.

This is Small ribosomal subunit protein eS1 from Sulfolobus acidocaldarius (strain ATCC 33909 / DSM 639 / JCM 8929 / NBRC 15157 / NCIMB 11770).